The sequence spans 148 residues: SsrA-binding protein (148 aa).

The disordered stretch occupies residues 119-148 (AKGKKQHDKRETEKKRDWEREKARLMRSPG). Residues 126–142 (DKRETEKKRDWEREKAR) are compositionally biased toward basic and acidic residues.

This sequence belongs to the SmpB family.

The protein localises to the cytoplasm. In terms of biological role, required for rescue of stalled ribosomes mediated by trans-translation. Binds to transfer-messenger RNA (tmRNA), required for stable association of tmRNA with ribosomes. tmRNA and SmpB together mimic tRNA shape, replacing the anticodon stem-loop with SmpB. tmRNA is encoded by the ssrA gene; the 2 termini fold to resemble tRNA(Ala) and it encodes a 'tag peptide', a short internal open reading frame. During trans-translation Ala-aminoacylated tmRNA acts like a tRNA, entering the A-site of stalled ribosomes, displacing the stalled mRNA. The ribosome then switches to translate the ORF on the tmRNA; the nascent peptide is terminated with the 'tag peptide' encoded by the tmRNA and targeted for degradation. The ribosome is freed to recommence translation, which seems to be the essential function of trans-translation. This is SsrA-binding protein from Paraburkholderia xenovorans (strain LB400).